The sequence spans 218 residues: Octanoyltransferase (218 aa).

The region spanning 30-217 (GEAGELVWLV…SFARNFPPLA (188 aa)) is the BPL/LPL catalytic domain. Substrate contacts are provided by residues 68-75 (RGGQYTYH), 148-150 (AIG), and 161-163 (GIA). The active-site Acyl-thioester intermediate is the Cys179.

The protein belongs to the LipB family.

It is found in the cytoplasm. The enzyme catalyses octanoyl-[ACP] + L-lysyl-[protein] = N(6)-octanoyl-L-lysyl-[protein] + holo-[ACP] + H(+). It participates in protein modification; protein lipoylation via endogenous pathway; protein N(6)-(lipoyl)lysine from octanoyl-[acyl-carrier-protein]: step 1/2. In terms of biological role, catalyzes the transfer of endogenously produced octanoic acid from octanoyl-acyl-carrier-protein onto the lipoyl domains of lipoate-dependent enzymes. Lipoyl-ACP can also act as a substrate although octanoyl-ACP is likely to be the physiological substrate. This chain is Octanoyltransferase, found in Paracoccus denitrificans (strain Pd 1222).